The following is a 397-amino-acid chain: Linalool dehydratase/isomerase (397 aa).

The signal sequence occupies residues 1 to 26 (MRFTLKTTAIVSAAALLAGFGPPPRA). Aspartate 64 functions as the Proton donor/acceptor in the catalytic mechanism. Cystine bridges form between cysteine 74-cysteine 127 and cysteine 196-cysteine 205. Position 196 (cysteine 196) interacts with (2E)-geraniol.

In terms of assembly, homotetramer. Homopentamer.

It is found in the periplasm. The catalysed reaction is (S)-linalool = beta-myrcene + H2O. The enzyme catalyses (2E)-geraniol = (S)-linalool. It functions in the pathway terpene metabolism; monoterpene degradation. With respect to regulation, is inhibited by molecular oxygen, high salt concentrations (NaCl, KCl, or MgCl(2)), urea, and Ti(III)citrate. Activity is not affected by EDTA. Anaerobically catalyzes the stereospecific hydration of beta-myrcene to (3S)-linalool and the isomerization of (3S)-linalool to geraniol. Is thus involved in the initial steps of the anaerobic degradation of the monoterpene beta-myrcene. Also catalyzes the reverse reactions, i.e. the isomerization of geraniol to linalool and the dehydration of linalool to myrcene. In this direction, the formation of myrcene from geraniol may be seen as a detoxification process for the monoterpene alcohol. Shows a relatively broad substrate specificity and can use various geraniol and linalool derivatives. Substrates required a specific alpha-methylallyl alcohol signature motif. Neither the monoterpenes alpha- and beta-ocimene nor the monoterpenoids citronellol and nerol can be used as substrates. The sequence is that of Linalool dehydratase/isomerase from Castellaniella defragrans (strain DSM 12143 / CCUG 39792 / 65Phen) (Alcaligenes defragrans).